A 248-amino-acid polypeptide reads, in one-letter code: Phosphoadenosine 5'-phosphosulfate reductase (248 aa).

The active-site Nucleophile; cysteine thiosulfonate intermediate is Cys239.

This sequence belongs to the PAPS reductase family. CysH subfamily.

It localises to the cytoplasm. It carries out the reaction [thioredoxin]-disulfide + sulfite + adenosine 3',5'-bisphosphate + 2 H(+) = [thioredoxin]-dithiol + 3'-phosphoadenylyl sulfate. It participates in sulfur metabolism; hydrogen sulfide biosynthesis; sulfite from sulfate: step 3/3. Functionally, catalyzes the formation of sulfite from phosphoadenosine 5'-phosphosulfate (PAPS) using thioredoxin as an electron donor. This Alteromonas mediterranea (strain DSM 17117 / CIP 110805 / LMG 28347 / Deep ecotype) protein is Phosphoadenosine 5'-phosphosulfate reductase.